The sequence spans 428 residues: Inward rectifier potassium channel 2 (428 aa).

Over methionine 1–tryptophan 81 the chain is Cytoplasmic. Position 76 is an S-nitrosocysteine (cysteine 76). The chain crosses the membrane as a helical span at residues arginine 82 to isoleucine 106. Residues alanine 107 to serine 128 are Extracellular-facing. The helical; Pore-forming intramembrane region spans phenylalanine 129–glutamine 140. The pore-forming intramembrane region spans threonine 141–phenylalanine 147. Residues threonine 142–phenylalanine 147 carry the Selectivity filter motif. The Extracellular portion of the chain corresponds to arginine 148–isoleucine 156. A helical membrane pass occupies residues alanine 157–alanine 178. Over valine 179–isoleucine 428 the chain is Cytoplasmic. The segment at alanine 181–leucine 208 is polyphosphoinositide (PIP2)-binding. The interval threonine 383–isoleucine 428 is disordered. A PDZ-binding motif is present at residues serine 426 to isoleucine 428.

It belongs to the inward rectifier-type potassium channel (TC 1.A.2.1) family. KCNJ2 subfamily. In terms of assembly, homotetramer. Homomultimeric and heteromultimeric association with KCNJ4/Kir2.3. Can form heteromeric channels with Kir2.6/KCNJ18. Associates, via its PDZ-recognition domain, with a complex containing LIN7A, LIN7B, LIN7C, DLG1, CASK and APBA1. S-nitrosylation increases the open probability and inward rectifying currents. Prominently expressed in the central nervous system. Also found in other excitable tissues such as heart and skeletal muscle.

It localises to the cell membrane. The protein localises to the sarcolemma. It is found in the T-tubule. It catalyses the reaction K(+)(in) = K(+)(out). Activated by phosphatidylinositol 4,5 biphosphate (PtdIns(4,5)P2). Functionally, inward rectifier potassium channels are characterized by a greater tendency to allow potassium to flow into the cell rather than out of it. Their voltage dependence is regulated by the concentration of extracellular potassium; as external potassium is raised, the voltage range of the channel opening shifts to more positive voltages. The inward rectification is mainly due to the blockage of outward current by internal magnesium. Can be blocked by extracellular barium and cesium. Probably participates in establishing action potential waveform and excitability of neuronal and muscle tissues. The polypeptide is Inward rectifier potassium channel 2 (Kcnj2) (Mus musculus (Mouse)).